Here is a 62-residue protein sequence, read N- to C-terminus: Bacteriocin pediocin PA-1 (62 aa).

The propeptide occupies 1 to 18 (MKKIEKLTEKEMANIIGG). Cystine bridges form between cysteine 27/cysteine 32 and cysteine 42/cysteine 62. Residues 40–52 (TTCIINNGAMAWA) form a hydrophobic region.

The protein belongs to the bacteriocin class IIA/YGNGV family.

It is found in the secreted. Functionally, bactericidal activity (effective inhibitor of L.monocytogenes). The chain is Bacteriocin pediocin PA-1 (pedA) from Pediococcus acidilactici.